A 371-amino-acid chain; its full sequence is Cysteine endopeptidase Rep1 (371 aa).

The signal sequence occupies residues 1–28 (MGRVISSWRVLAVVAALMAMAAVELCAA). A propeptide spans 29-133 (IPFDERDLES…LPGFMYEGVR (105 aa)) (activation peptide). 3 disulfide bridges follow: Cys-156–Cys-198, Cys-190–Cys-231, and Cys-290–Cys-342. Residue Cys-159 is part of the active site. Asn-228 carries an N-linked (GlcNAc...) asparagine glycan. Active-site residues include His-296 and Asn-317.

Belongs to the peptidase C1 family. As to expression, expressed in germinating seeds.

The protein resides in the protein storage vacuole. Cysteine endopeptidase that digests in vitro both the acidic and basic subunits of glutelin, the major seed storage protein of rice. Acts as a negative regulator of cell death. The polypeptide is Cysteine endopeptidase Rep1 (Oryza sativa subsp. japonica (Rice)).